We begin with the raw amino-acid sequence, 256 residues long: PHD finger protein ALFIN-LIKE 4 (256 aa).

The disordered stretch occupies residues 149-195 (QSKTANGSSKNKSGSKPPKRPNSDSKPQKQVQAKYEEENGGRGNGGD). A compositionally biased stretch (low complexity) spans 154 to 164 (NGSSKNKSGSK). The segment at 200–252 (ETICGACGEAYANGEFWICCDICETWFHGKCVRITPAKAEHIKHYKCPGCSNK) adopts a PHD-type zinc-finger fold.

Belongs to the Alfin family. Interacts with H3K4me3 and to a lesser extent with H3K4me2.

Its subcellular location is the nucleus. Its function is as follows. Histone-binding component that specifically recognizes H3 tails trimethylated on 'Lys-4' (H3K4me3), which mark transcription start sites of virtually all active genes. The protein is PHD finger protein ALFIN-LIKE 4 of Oryza sativa subsp. indica (Rice).